The chain runs to 434 residues: Trigger factor (434 aa).

Residues 160–245 (GDKAKINFVG…LNEVQAANLP (86 aa)) form the PPIase FKBP-type domain.

The protein belongs to the FKBP-type PPIase family. Tig subfamily.

The protein localises to the cytoplasm. It carries out the reaction [protein]-peptidylproline (omega=180) = [protein]-peptidylproline (omega=0). Involved in protein export. Acts as a chaperone by maintaining the newly synthesized protein in an open conformation. Functions as a peptidyl-prolyl cis-trans isomerase. The chain is Trigger factor from Shewanella halifaxensis (strain HAW-EB4).